Reading from the N-terminus, the 816-residue chain is tRNA(Met) cytidine acetyltransferase TmcA (816 aa).

ATP contacts are provided by Gln265 and Arg439. An N-acetyltransferase domain is found at 469–664 (ELIRKMEVYL…YTAIVIKPIS (196 aa)). Acetyl-CoA is bound by residues 589 to 591 (IAT), Glu629, and Arg636.

It belongs to the TmcA family.

Its subcellular location is the cytoplasm. It carries out the reaction cytidine(34) in elongator tRNA(Met) + acetyl-CoA + ATP + H2O = N(4)-acetylcytidine(34) in elongator tRNA(Met) + ADP + phosphate + CoA + H(+). It catalyses the reaction a cytidine in RNA + acetyl-CoA + ATP + H2O = an N(4)-acetylcytidine in RNA + ADP + phosphate + CoA + H(+). The enzyme catalyses a cytidine in tRNA + acetyl-CoA + ATP + H2O = an N(4)-acetylcytidine in tRNA + ADP + phosphate + CoA + H(+). The catalysed reaction is a cytidine in mRNA + acetyl-CoA + ATP + H2O = an N(4)-acetylcytidine in mRNA + ADP + phosphate + CoA + H(+). In terms of biological role, catalyzes the formation of N(4)-acetylcytidine (ac(4)C) at the wobble position of tRNA(Met), by using acetyl-CoA as an acetyl donor and ATP (or GTP). Its function is as follows. Catalyzes the formation of 233 N(4)-acetylcytidine (ac(4)C) sites in RNA, on the middle C of a CCG motif. Modifications are found in rRNA, ncRNA, mRNA and tRNA. More acetylation is observed at 85 than at 65 or 75 degrees Celsius. The chain is tRNA(Met) cytidine acetyltransferase TmcA from Pyrococcus furiosus (strain ATCC 43587 / DSM 3638 / JCM 8422 / Vc1).